The sequence spans 273 residues: Zinc finger protein 80 (273 aa).

2 C2H2-type zinc fingers span residues 49–71 (YKCKECGKVFNKNSLLVRHHQIH) and 77–99 (YECQECGKAFHEKVDFVRHMRIH). The segment at 105–127 (CKCVECGKVFNRRSHLLCYRQIH) adopts a C2H2-type 3; atypical zinc-finger fold. 4 consecutive C2H2-type zinc fingers follow at residues 133–155 (YECSECGKTFSYHSVFIQHRMTH), 161–183 (FGCKECGKTFYYNSSLTRHMKIH), 189–211 (YKCGECGKTFTYHSVFFRHSMTH), and 217–239 (YECKECGKGFYYSYSLTRHTRSH).

The protein belongs to the krueppel C2H2-type zinc-finger protein family.

The protein localises to the nucleus. Functionally, may be involved in transcriptional regulation. This Gorilla gorilla gorilla (Western lowland gorilla) protein is Zinc finger protein 80 (ZNF80).